A 214-amino-acid chain; its full sequence is Holliday junction branch migration complex subunit RuvA (214 aa).

The tract at residues Met-1 to Thr-64 is domain I. Residues Ser-65–Asp-143 form a domain II region. The tract at residues Ile-144 to Ser-160 is flexible linker. The interval Thr-161–Lys-214 is domain III.

It belongs to the RuvA family. As to quaternary structure, homotetramer. Forms an RuvA(8)-RuvB(12)-Holliday junction (HJ) complex. HJ DNA is sandwiched between 2 RuvA tetramers; dsDNA enters through RuvA and exits via RuvB. An RuvB hexamer assembles on each DNA strand where it exits the tetramer. Each RuvB hexamer is contacted by two RuvA subunits (via domain III) on 2 adjacent RuvB subunits; this complex drives branch migration. In the full resolvosome a probable DNA-RuvA(4)-RuvB(12)-RuvC(2) complex forms which resolves the HJ.

Its subcellular location is the cytoplasm. Its function is as follows. The RuvA-RuvB-RuvC complex processes Holliday junction (HJ) DNA during genetic recombination and DNA repair, while the RuvA-RuvB complex plays an important role in the rescue of blocked DNA replication forks via replication fork reversal (RFR). RuvA specifically binds to HJ cruciform DNA, conferring on it an open structure. The RuvB hexamer acts as an ATP-dependent pump, pulling dsDNA into and through the RuvAB complex. HJ branch migration allows RuvC to scan DNA until it finds its consensus sequence, where it cleaves and resolves the cruciform DNA. The chain is Holliday junction branch migration complex subunit RuvA from Natranaerobius thermophilus (strain ATCC BAA-1301 / DSM 18059 / JW/NM-WN-LF).